The sequence spans 761 residues: Ribonucleoside-diphosphate reductase 1 subunit alpha (761 aa).

Residues 5 to 95 (LLVTKRDGST…IFHLRKKAYG (91 aa)) form the ATP-cone domain. Residues lysine 9, 15-21 (ERINLDK), threonine 55, and lysine 91 each bind ATP. Threonine 209 is a GDP binding site. Cysteine 225 and cysteine 462 are oxidised to a cystine. Residues 232–234 (DSL), arginine 262, and arginine 269 contribute to the dTTP site. Lysine 283 is modified (N6-acetyllysine). Residue asparagine 437 participates in GDP binding. Asparagine 437 (proton acceptor) is an active-site residue. The Cysteine radical intermediate role is filled by cysteine 439. Residues glutamate 441 and 623–625 (ETS) each bind GDP. The active-site Proton acceptor is the glutamate 441.

It belongs to the ribonucleoside diphosphate reductase large chain family. In terms of assembly, tetramer of two alpha (R1) and two beta (R2) subunits. The B1 protein is a dimer of alpha subunits. A radical transfer pathway occurs between 'Tyr-122' of R2 and R1. In terms of processing, binding of the substrate occurs primarily when the active-site cysteines are reduced.

It catalyses the reaction a 2'-deoxyribonucleoside 5'-diphosphate + [thioredoxin]-disulfide + H2O = a ribonucleoside 5'-diphosphate + [thioredoxin]-dithiol. Under complex allosteric control mediated by deoxynucleoside triphosphates and ATP binding to separate specificity and activation sites on the alpha subunit. The type of nucleotide bound at the specificity site determines substrate preference. It seems probable that ATP makes the enzyme reduce CDP and UDP, dGTP favors ADP reduction and dTTP favors GDP reduction. Stimulated by ATP and inhibited by dATP binding to the activity site. In vitro, its activity is increased by dithiothreitol (DTT) or thioredoxins (non-specific). Inhibited by hydroxyurea, leads to dNTP depletion, replication fork arrest and genomic instability. Its function is as follows. Provides the precursors necessary for DNA synthesis. Catalyzes the biosynthesis of deoxyribonucleotides from the corresponding ribonucleotides. R1 contains the binding sites for both substrates and allosteric effectors and carries out the actual reduction of the ribonucleotide. It also provides redox-active cysteines. The chain is Ribonucleoside-diphosphate reductase 1 subunit alpha (nrdA) from Escherichia coli (strain K12).